Reading from the N-terminus, the 467-residue chain is 3-isopropylmalate dehydratase large subunit (467 aa).

[4Fe-4S] cluster is bound by residues Cys-347, Cys-407, and Cys-410.

It belongs to the aconitase/IPM isomerase family. LeuC type 1 subfamily. Heterodimer of LeuC and LeuD. [4Fe-4S] cluster serves as cofactor.

The enzyme catalyses (2R,3S)-3-isopropylmalate = (2S)-2-isopropylmalate. It participates in amino-acid biosynthesis; L-leucine biosynthesis; L-leucine from 3-methyl-2-oxobutanoate: step 2/4. Functionally, catalyzes the isomerization between 2-isopropylmalate and 3-isopropylmalate, via the formation of 2-isopropylmaleate. The polypeptide is 3-isopropylmalate dehydratase large subunit (Nostoc sp. (strain PCC 7120 / SAG 25.82 / UTEX 2576)).